Consider the following 77-residue polypeptide: Protein AC43 (77 aa).

Plays a role in the production of occlusion bodies as well as expression of the polyhedrin gene. The sequence is that of Protein AC43 from Autographa californica nuclear polyhedrosis virus (AcMNPV).